The following is a 311-amino-acid chain: Aspartate carbamoyltransferase catalytic subunit (311 aa).

Carbamoyl phosphate contacts are provided by arginine 59 and threonine 60. Lysine 87 contributes to the L-aspartate binding site. 3 residues coordinate carbamoyl phosphate: arginine 109, histidine 139, and glutamine 142. Positions 172 and 224 each coordinate L-aspartate. Positions 265 and 266 each coordinate carbamoyl phosphate.

The protein belongs to the aspartate/ornithine carbamoyltransferase superfamily. ATCase family. As to quaternary structure, heterododecamer (2C3:3R2) of six catalytic PyrB chains organized as two trimers (C3), and six regulatory PyrI chains organized as three dimers (R2).

It catalyses the reaction carbamoyl phosphate + L-aspartate = N-carbamoyl-L-aspartate + phosphate + H(+). The protein operates within pyrimidine metabolism; UMP biosynthesis via de novo pathway; (S)-dihydroorotate from bicarbonate: step 2/3. In terms of biological role, catalyzes the condensation of carbamoyl phosphate and aspartate to form carbamoyl aspartate and inorganic phosphate, the committed step in the de novo pyrimidine nucleotide biosynthesis pathway. In Streptococcus pyogenes serotype M12 (strain MGAS2096), this protein is Aspartate carbamoyltransferase catalytic subunit.